The chain runs to 840 residues: Probable sulfate permease C869.05c (840 aa).

Transmembrane regions (helical) follow at residues 120 to 140 (WLINDLIAGITVGCVVVPQGM), 148 to 168 (LPSEYGLYSSFVGVAIYCFFA), 173 to 193 (VSIGPVAVMSLITAKVIANVM), 208 to 228 (LALLAGAITCGIGLLRLGFII), 230 to 250 (FIPVPAVAGFTTGSALNILSG), 278 to 298 (LPDTTVDAAFGLVSLFILFFT), 315 to 335 (AFFLTNTLRSAVVVIVGTAIS), 410 to 430 (LIAMGVTNLIGIFFNAYPATG), 447 to 467 (IAGIFTAAVVILSLYCLTDAF), 470 to 490 (IPNAILSAVIIHAVTDLILPM), 505 to 525 (CIFFISVIVSVFSSIENGIYV), and 527 to 547 (VCLAAALLLLRIAKPHGSFLG). The STAS domain maps to 578 to 733 (NLEIQSPPPG…CVEVAAPLRD (156 aa)). Ser-823 bears the Phosphoserine mark.

The protein belongs to the SLC26A/SulP transporter (TC 2.A.53) family.

The protein resides in the membrane. Its function is as follows. High affinity uptake of sulfate into the cell. This chain is Probable sulfate permease C869.05c, found in Schizosaccharomyces pombe (strain 972 / ATCC 24843) (Fission yeast).